The following is a 429-amino-acid chain: Adenylosuccinate synthetase (429 aa).

GTP contacts are provided by residues G12 to K18 and G40 to T42. D13 serves as the catalytic Proton acceptor. 2 residues coordinate Mg(2+): D13 and G40. IMP-binding positions include D13 to K16, N38 to H41, T129, R143, Q223, T238, and R302. Residue H41 is the Proton donor of the active site. Position 298–304 (T298–R304) interacts with substrate. Residues R304, K330–D332, and S412–S414 each bind GTP.

This sequence belongs to the adenylosuccinate synthetase family. In terms of assembly, homodimer. Requires Mg(2+) as cofactor.

It is found in the cytoplasm. It carries out the reaction IMP + L-aspartate + GTP = N(6)-(1,2-dicarboxyethyl)-AMP + GDP + phosphate + 2 H(+). Its pathway is purine metabolism; AMP biosynthesis via de novo pathway; AMP from IMP: step 1/2. In terms of biological role, plays an important role in the de novo pathway of purine nucleotide biosynthesis. Catalyzes the first committed step in the biosynthesis of AMP from IMP. The polypeptide is Adenylosuccinate synthetase (Zymomonas mobilis subsp. mobilis (strain ATCC 31821 / ZM4 / CP4)).